Consider the following 224-residue polypeptide: 7-cyano-7-deazaguanine synthase (224 aa).

An ATP-binding site is contributed by 8–18; it reads LSGGMDSAAVI. Positions 186, 196, 199, and 202 each coordinate Zn(2+).

Belongs to the QueC family. The cofactor is Zn(2+).

The enzyme catalyses 7-carboxy-7-deazaguanine + NH4(+) + ATP = 7-cyano-7-deazaguanine + ADP + phosphate + H2O + H(+). It participates in purine metabolism; 7-cyano-7-deazaguanine biosynthesis. Functionally, catalyzes the ATP-dependent conversion of 7-carboxy-7-deazaguanine (CDG) to 7-cyano-7-deazaguanine (preQ(0)). This chain is 7-cyano-7-deazaguanine synthase, found in Xanthomonas axonopodis pv. citri (strain 306).